Consider the following 190-residue polypeptide: Inosine triphosphate pyrophosphatase (190 aa).

9 to 14 contributes to the ITP binding site; that stretch reads TGNAKK. Glutamate 39 is a binding site for Mg(2+). ITP-binding positions include lysine 51, 67–68, lysine 84, 144–147, lysine 167, and 172–173; these read DT, FGWD, and HR.

The protein belongs to the HAM1 NTPase family. In terms of assembly, homodimer. It depends on Mg(2+) as a cofactor. The cofactor is Mn(2+).

The protein localises to the cytoplasm. The catalysed reaction is ITP + H2O = IMP + diphosphate + H(+). It catalyses the reaction dITP + H2O = dIMP + diphosphate + H(+). The enzyme catalyses XTP + H2O = XMP + diphosphate + H(+). Pyrophosphatase that hydrolyzes non-canonical purine nucleotides such as inosine triphosphate (ITP), deoxyinosine triphosphate (dITP) or xanthosine 5'-triphosphate (XTP) to their respective monophosphate derivatives. The enzyme does not distinguish between the deoxy- and ribose forms. Probably excludes non-canonical purines from RNA and DNA precursor pools, thus preventing their incorporation into RNA and DNA and avoiding chromosomal lesions. This is Inosine triphosphate pyrophosphatase from Pediculus humanus subsp. corporis (Body louse).